The following is a 197-amino-acid chain: Viral polyamine acetyltransferase (197 aa).

Position 22 (Asn22) interacts with acetyl-CoA. Residue Glu27 is part of the active site. The region spanning 102–182 (SYTPDDKCLY…YQYGITKPFD (81 aa)) is the N-acetyltransferase domain. Ile115, Ser117, Gly121, Gly123, Ala125, Thr126, Thr149, Asn150, and Lys159 together coordinate acetyl-CoA.

Belongs to the acetyltransferase family.

It catalyses the reaction spermine + acetyl-CoA = N(1)-acetylspermine + CoA + H(+). It carries out the reaction spermidine + acetyl-CoA = N(1)-acetylspermidine + CoA + H(+). The enzyme catalyses spermidine + acetyl-CoA = N(8)-acetylspermidine + CoA + H(+). The catalysed reaction is putrescine + acetyl-CoA = N-acetylputrescine + CoA + H(+). It catalyses the reaction cadaverine + acetyl-CoA = N-acetylcadaverine + CoA + H(+). It carries out the reaction sym-homospermidine + acetyl-CoA = N(1)-acetyl-sym-homospermidine + CoA + H(+). Functionally, acetylates polyamines such as spermine, spermidine, cadaverine, homospermidine and putrescine (the latter with low efficiency). May play a role in the regulation of polyamine catabolism in the host during viral replication. The polypeptide is Viral polyamine acetyltransferase (Chlorella (PBCV-1)).